The sequence spans 157 residues: Protein-export protein SecB (157 aa).

Belongs to the SecB family. Homotetramer, a dimer of dimers. One homotetramer interacts with 1 SecA dimer.

It localises to the cytoplasm. Its function is as follows. One of the proteins required for the normal export of preproteins out of the cell cytoplasm. It is a molecular chaperone that binds to a subset of precursor proteins, maintaining them in a translocation-competent state. It also specifically binds to its receptor SecA. The chain is Protein-export protein SecB from Photobacterium profundum (strain SS9).